Reading from the N-terminus, the 258-residue chain is Apolipoprotein E (258 aa).

The signal sequence occupies residues Met1–Ala19. 3 consecutive repeat copies span residues Val112–Gly133, Gln134–Ala155, and Lys156–Thr173. Residues Val112–Thr173 form a 3 X 22 AA approximate tandem repeats region.

This sequence belongs to the apolipoprotein A1/A4/E family. In terms of assembly, homotetramer.

Its subcellular location is the secreted. The protein resides in the extracellular space. It is found in the extracellular matrix. APOE is an apolipoprotein, a protein associating with lipid particles, that mainly functions in lipoprotein-mediated lipid transport between organs via the plasma and interstitial fluids. APOE is a core component of plasma lipoproteins and is involved in their production, conversion and clearance. Apolipoproteins are amphipathic molecules that interact both with lipids of the lipoprotein particle core and the aqueous environment of the plasma. The polypeptide is Apolipoprotein E (APOE) (Alligator mississippiensis (American alligator)).